The primary structure comprises 290 residues: Probable endonuclease 4 (290 aa).

Histidine 69, histidine 109, glutamate 145, aspartate 179, histidine 182, histidine 216, aspartate 229, histidine 231, and glutamate 261 together coordinate Zn(2+).

This sequence belongs to the AP endonuclease 2 family. Zn(2+) is required as a cofactor.

It carries out the reaction Endonucleolytic cleavage to 5'-phosphooligonucleotide end-products.. Functionally, endonuclease IV plays a role in DNA repair. It cleaves phosphodiester bonds at apurinic or apyrimidinic (AP) sites, generating a 3'-hydroxyl group and a 5'-terminal sugar phosphate. The protein is Probable endonuclease 4 of Chlorobium limicola (strain DSM 245 / NBRC 103803 / 6330).